Reading from the N-terminus, the 160-residue chain is SsrA-binding protein (160 aa).

This sequence belongs to the SmpB family.

It is found in the cytoplasm. Required for rescue of stalled ribosomes mediated by trans-translation. Binds to transfer-messenger RNA (tmRNA), required for stable association of tmRNA with ribosomes. tmRNA and SmpB together mimic tRNA shape, replacing the anticodon stem-loop with SmpB. tmRNA is encoded by the ssrA gene; the 2 termini fold to resemble tRNA(Ala) and it encodes a 'tag peptide', a short internal open reading frame. During trans-translation Ala-aminoacylated tmRNA acts like a tRNA, entering the A-site of stalled ribosomes, displacing the stalled mRNA. The ribosome then switches to translate the ORF on the tmRNA; the nascent peptide is terminated with the 'tag peptide' encoded by the tmRNA and targeted for degradation. The ribosome is freed to recommence translation, which seems to be the essential function of trans-translation. The chain is SsrA-binding protein from Escherichia coli O139:H28 (strain E24377A / ETEC).